A 228-amino-acid chain; its full sequence is UPF0758 protein SAB1521c (228 aa).

In terms of domain architecture, MPN spans 102–224 (KITQPSDVAD…FTSLVEAGYF (123 aa)). Zn(2+) contacts are provided by His173, His175, and Asp186. A JAMM motif motif is present at residues 173 to 186 (HNHPSGDVTPSQED).

It belongs to the UPF0758 family.

This chain is UPF0758 protein SAB1521c, found in Staphylococcus aureus (strain bovine RF122 / ET3-1).